We begin with the raw amino-acid sequence, 466 residues long: MKTKPLPTAPMAWAESAVETTTGPRELAGHAPLRRVLRPPIARRDGPVLLGDRAPRRTASTMWLLGIDPAESSPGTRATRDDTEQAVDKILRGARRAGGLTVPGAPRYHLTRQVTLTDLCQPNAERAGALLLALRHPTDLPHLARHRAPPGRQTERLAEAWGQLLEASALGSGRAESGCARAGLVSFNFLVAACAAAYDARDAAEAVRAHITTNYGGTRAGARLDRFSECLRAMVHTHVFPHEVMRFFGGLVSWVTQDELASVTAVCSGPQEATHTGHPGRPRSAVTIPACAFVDLDAELCLGGPGAAFLYLVFTYRQCRDQELCCVYVVKSQLPPRGLEAALERLFGRLRITNTIHGAEDMTPPPPNRNVDFPLAVLAASSQSPRCSASQVTNPQFVDRLYRWQPDLRGRPTARTCTYAAFAELGVMPDDSPRCLHRTERFGAVGVPVVILEGVVWRPGGWRACA.

Positions 1-29 are disordered; it reads MKTKPLPTAPMAWAESAVETTTGPRELAG.

It belongs to the herpesviridae TRX1 protein family. Interacts with TRX2, MCP and capsid vertex component 2/CVC2.

It is found in the virion. The protein resides in the host nucleus. Its function is as follows. Structural component of the T=16 icosahedral capsid. The capsid is composed of pentamers and hexamers of major capsid protein/MCP, which are linked together by heterotrimers called triplexes. These triplexes are formed by a single molecule of triplex protein 1/TRX1 and two copies of triplex protein 2/TRX2. Additionally, TRX1 is required for efficient transport of TRX2 to the nucleus, which is the site of capsid assembly. The chain is Triplex capsid protein 1 from Homo sapiens (Human).